The sequence spans 309 residues: uncharacterized protein (309 aa).

Composition is skewed to pro residues over residues Met-1 to Pro-17 and Ser-24 to Arg-51. Disordered regions lie at residues Met-1–Val-174 and Pro-216–Ala-240. The span at Leu-67–Ser-83 shows a compositional bias: low complexity. The span at Thr-84–Pro-112 shows a compositional bias: pro residues. Composition is skewed to low complexity over residues Ala-113–Ser-125 and Ala-135–Ser-144. Residues Pro-160–Val-174 show a composition bias toward pro residues. Residues Leu-278–Leu-298 traverse the membrane as a helical segment.

The protein resides in the host membrane. This is an uncharacterized protein from Vitis vinifera (Grape).